A 243-amino-acid chain; its full sequence is Venom nerve growth factor (243 aa).

Residues 1–18 (MSMLCYTLIIAFLIGIWA) form the signal peptide. Positions 19–125 (APKSEDNVPL…TLNRNIRTKR (107 aa)) are excised as a propeptide. Positions 45–66 (HEGLKTSRNTDQRHLAPKKAED) are disordered. The segment covering 46 to 66 (EGLKTSRNTDQRHLAPKKAED) has biased composition (basic and acidic residues). Intrachain disulfides connect Cys139-Cys204, Cys182-Cys232, and Cys192-Cys234. N-linked (GlcNAc...) asparagine glycosylation is present at Asn148.

It belongs to the NGF-beta family. In terms of assembly, homodimer; non-covalently linked. As to expression, expressed by the venom gland.

The protein resides in the secreted. Nerve growth factor is important for the development and maintenance of the sympathetic and sensory nervous systems. It stimulates division and differentiation of sympathetic and embryonic sensory neurons as well as basal forebrain cholinergic neurons in the brain. Its relevance in the snake venom is not clear. However, it has been shown to inhibit metalloproteinase-dependent proteolysis of platelet glycoprotein Ib alpha, suggesting a metalloproteinase inhibition to prevent metalloprotease autodigestion and/or protection against prey proteases. Binds a lipid between the two protein chains in the homodimer. The lipid-bound form promotes histamine relase from mouse mast cells, contrary to the lipid-free form. This chain is Venom nerve growth factor, found in Cryptophis nigrescens (Eastern small-eyed snake).